The following is an 82-amino-acid chain: Small ribosomal subunit protein bS16 (82 aa).

Belongs to the bacterial ribosomal protein bS16 family.

The chain is Small ribosomal subunit protein bS16 from Pseudoalteromonas translucida (strain TAC 125).